A 117-amino-acid polypeptide reads, in one-letter code: Acrylate reductase cytochrome subunit (117 aa).

The first 22 residues, 1 to 22 (MKMYKLMLGLVLAGLVSLSAQA), serve as a signal peptide directing secretion. Heme c-binding residues include histidine 29, cysteine 37, cysteine 40, histidine 41, cysteine 54, cysteine 57, histidine 58, histidine 79, histidine 83, cysteine 90, cysteine 93, histidine 94, histidine 97, cysteine 104, cysteine 107, and histidine 108.

As to quaternary structure, the ArdAB flavocytochrome c is composed of a FAD-containing subunit (ArdA) and a heme c-containing subunit (ArdB). It depends on heme c as a cofactor.

The protein resides in the periplasm. Methacrylate acts as a competitive inhibitor of the acrylate reductase activity and suppresses the reductase activity in dose-dependent manner. Functionally, heme c-containing subunit of the ArdAB flavocytochrome c, which catalyzes the reduction of acrylate to propanoate and supports dimethylsulfoniopropionate-dependent anaerobic respiration. In vitro, can use the artificial electron donor methyl viologen. The natural electron donor is probably a low-potential cytochrome c. Also shows weak activity toward methacrylate in vitro (at a 22-fold lower rate) but cannot use other tested 2-enoates, including crotonic, fumaric, sorbic, urocanic, cinnamic, p-coumaric, caffeic or ferulic acids. The protein catalyzes a unidirectional reaction and cannot oxidize propanoate with phenazine metasulfate and dichlorophenolindophenol as electron acceptors. The sequence is that of Acrylate reductase cytochrome subunit from Shewanella woodyi (strain ATCC 51908 / MS32).